The following is a 301-amino-acid chain: 2-methoxy-6-polyprenyl-1,4-benzoquinol methylase, mitochondrial (301 aa).

The N-terminal 16 residues, 1-16, are a transit peptide targeting the mitochondrion; sequence MQTTRSTRLLSLARRF. The span at 20–31 shows a compositional bias: polar residues; that stretch reads RTASQSAQNSKG. The segment at 20–44 is disordered; that stretch reads RTASQSAQNSKGMASGAESISGKEK. Residues Thr-111, Asp-139, and 173–174 contribute to the S-adenosyl-L-methionine site; that span reads DA.

This sequence belongs to the class I-like SAM-binding methyltransferase superfamily. MenG/UbiE family. Component of a multi-subunit COQ enzyme complex.

The protein localises to the mitochondrion inner membrane. The catalysed reaction is a 2-methoxy-6-(all-trans-polyprenyl)benzene-1,4-diol + S-adenosyl-L-methionine = a 5-methoxy-2-methyl-3-(all-trans-polyprenyl)benzene-1,4-diol + S-adenosyl-L-homocysteine + H(+). It functions in the pathway cofactor biosynthesis; ubiquinone biosynthesis. Methyltransferase required for the conversion of 2-polyprenyl-6-methoxy-1,4-benzoquinol (DDMQH2) to 2-polyprenyl-3-methyl-6-methoxy-1,4-benzoquinol (DMQH2). In Drosophila melanogaster (Fruit fly), this protein is 2-methoxy-6-polyprenyl-1,4-benzoquinol methylase, mitochondrial.